A 496-amino-acid chain; its full sequence is Glycerol kinase (496 aa).

T12 is a binding site for ADP. Residues T12, T13, and S14 each coordinate ATP. T12 is a binding site for sn-glycerol 3-phosphate. An ADP-binding site is contributed by R16. The sn-glycerol 3-phosphate site is built by R82, E83, Y134, and D244. Glycerol is bound by residues R82, E83, Y134, D244, and Q245. T266 and G309 together coordinate ADP. Residues T266, G309, Q313, and G410 each contribute to the ATP site. Positions 410 and 414 each coordinate ADP.

This sequence belongs to the FGGY kinase family.

It carries out the reaction glycerol + ATP = sn-glycerol 3-phosphate + ADP + H(+). It functions in the pathway polyol metabolism; glycerol degradation via glycerol kinase pathway; sn-glycerol 3-phosphate from glycerol: step 1/1. Inhibited by fructose 1,6-bisphosphate (FBP). Functionally, key enzyme in the regulation of glycerol uptake and metabolism. Catalyzes the phosphorylation of glycerol to yield sn-glycerol 3-phosphate. The sequence is that of Glycerol kinase from Treponema denticola (strain ATCC 35405 / DSM 14222 / CIP 103919 / JCM 8153 / KCTC 15104).